We begin with the raw amino-acid sequence, 195 residues long: Imidazoleglycerol-phosphate dehydratase (195 aa).

Belongs to the imidazoleglycerol-phosphate dehydratase family.

It is found in the cytoplasm. The catalysed reaction is D-erythro-1-(imidazol-4-yl)glycerol 3-phosphate = 3-(imidazol-4-yl)-2-oxopropyl phosphate + H2O. Its pathway is amino-acid biosynthesis; L-histidine biosynthesis; L-histidine from 5-phospho-alpha-D-ribose 1-diphosphate: step 6/9. The polypeptide is Imidazoleglycerol-phosphate dehydratase (Methylobacterium radiotolerans (strain ATCC 27329 / DSM 1819 / JCM 2831 / NBRC 15690 / NCIMB 10815 / 0-1)).